The sequence spans 89 residues: Small ribosomal subunit protein uS15 (89 aa).

Belongs to the universal ribosomal protein uS15 family. Part of the 30S ribosomal subunit. Forms a bridge to the 50S subunit in the 70S ribosome, contacting the 23S rRNA.

One of the primary rRNA binding proteins, it binds directly to 16S rRNA where it helps nucleate assembly of the platform of the 30S subunit by binding and bridging several RNA helices of the 16S rRNA. In terms of biological role, forms an intersubunit bridge (bridge B4) with the 23S rRNA of the 50S subunit in the ribosome. This Bacillus anthracis (strain CDC 684 / NRRL 3495) protein is Small ribosomal subunit protein uS15.